The following is a 322-amino-acid chain: MSQLYDITIVGGGPVGLFAAFYAHXRQAKVQIIDSLPQLGGQPAILYPEKEILDVPGFPNLTGEELTNRLIEQLNGFDTPIHLNETVLEIDKQEEEFAITTSKGSHLTKTVIIAMGGGAFKPRPLELESVEGYENIHYHVSNIQQYAGKKVTILGGGDSAVDWALAFEKIAPTTLVHRRDNFRALEHSVQALQESSVTIKTPFAPSQLLGNGKTLDKLEITKVKSDETETIDLDHLFVNYGFKSSVGNLKNWGLDLNRHKIIVNSKQESSQAGIYAIGDCCYYDGKIDLIATGLGEAPTAVNNAINYIDPEQKVQPKHSTSL.

7 residues coordinate FAD: D34, Q42, Y47, V87, F120, D279, and T320.

Belongs to the ferredoxin--NADP reductase type 2 family. Homodimer. Requires FAD as cofactor.

The catalysed reaction is 2 reduced [2Fe-2S]-[ferredoxin] + NADP(+) + H(+) = 2 oxidized [2Fe-2S]-[ferredoxin] + NADPH. This is Ferredoxin--NADP reductase from Streptococcus pneumoniae serotype 19F (strain G54).